We begin with the raw amino-acid sequence, 469 residues long: Regulator of G-protein signaling 7 (469 aa).

Residues 37-112 form the DEP domain; it reads EKNGIPIRTV…DDGTFYRFQT (76 aa). Ser229 and Ser241 each carry phosphoserine. The tract at residues 236–255 is disordered; that stretch reads DIRSHSPTHTPTPETKPPTE. Position 243 is a phosphothreonine (Thr243). The G protein gamma domain maps to 255 to 316; that stretch reads EDELHQQIKY…LSDDTTFWEL (62 aa). The RGS domain occupies 333-448; the sequence is GMDEALKDPV…IRSSAYQELL (116 aa). Position 434 is a phosphoserine (Ser434).

Interacts with GNB5, forming the RGS7-GNB5 complex. Interacts with GPR158; promotes the GTPase activator activity of the RGS7-GNB5 complex in absence of glycine, in contrast GTPase activator activity of the RGS7-GNB5 complex is inhibited in presence of glycine. Interacts with GPR179. Interacts with PKD1; this prevents rapid proteasomal degradation. Interacts with RGS7BP, leading to regulate the subcellular location of the heterodimer formed with GNB5. Interacts (phosphorylated form) with 14-3-3 protein YWHAQ. Interacts with SNAPIN. Interacts with GNAI1. Interacts with GNAO1, GNAI3 and GNAZ. Palmitoylated. In terms of processing, ubiquitinated, leading to rapid proteasomal degradation. Post-translationally, phosphorylation and subsequent interaction with 14-3-3 proteins inhibits GAP activity. Detected in brain (at protein level).

It is found in the cytoplasm. The protein resides in the cytosol. Its subcellular location is the cell membrane. It localises to the membrane. Functionally, GTPase activator component of the RGS7-GNB5 complex that regulates G protein-coupled receptor signaling cascades. The RGS7-GNB5 complex acts as an inhibitor signal transduction by promoting the GTPase activity of G protein alpha subunits, such as GNAO1, thereby driving them into their inactive GDP-bound form. May play a role in synaptic vesicle exocytosis. Glycine-dependent regulation of the RGS7-GNB5 complex by GPR158 affects mood and cognition via its ability to regulate neuronal excitability in L2/L3 pyramidal neurons of the prefrontal cortex. Modulates the activity of potassium channels that are activated by GNAO1 in response to muscarinic acetylcholine receptor M2/CHRM2 signaling. The sequence is that of Regulator of G-protein signaling 7 (Rgs7) from Mus musculus (Mouse).